A 272-amino-acid polypeptide reads, in one-letter code: Phosphate import ATP-binding protein PstB 1 (272 aa).

Positions 26 to 267 constitute an ABC transporter domain; that stretch reads ISIENLNLFY…PMKKQTEDYI (242 aa). 58-65 lines the ATP pocket; that stretch reads GPSGCGKS.

The protein belongs to the ABC transporter superfamily. Phosphate importer (TC 3.A.1.7) family. The complex is composed of two ATP-binding proteins (PstB), two transmembrane proteins (PstC and PstA) and a solute-binding protein (PstS).

Its subcellular location is the cell inner membrane. The enzyme catalyses phosphate(out) + ATP + H2O = ADP + 2 phosphate(in) + H(+). In terms of biological role, part of the ABC transporter complex PstSACB involved in phosphate import. Responsible for energy coupling to the transport system. The polypeptide is Phosphate import ATP-binding protein PstB 1 (Vibrio parahaemolyticus serotype O3:K6 (strain RIMD 2210633)).